The primary structure comprises 148 residues: Large ribosomal subunit protein uL15 (148 aa).

A disordered region spans residues M1–L57. Positions K10–G20 are enriched in basic residues. The span at I23 to M35 shows a compositional bias: gly residues.

Belongs to the universal ribosomal protein uL15 family. Part of the 50S ribosomal subunit.

Binds to the 23S rRNA. This is Large ribosomal subunit protein uL15 from Trichormus variabilis (strain ATCC 29413 / PCC 7937) (Anabaena variabilis).